A 140-amino-acid polypeptide reads, in one-letter code: Small ribosomal subunit protein uS12 (140 aa).

D102 is modified (3-methylthioaspartic acid).

Belongs to the universal ribosomal protein uS12 family. In terms of assembly, part of the 30S ribosomal subunit. Contacts proteins S8 and S17. May interact with IF1 in the 30S initiation complex.

With S4 and S5 plays an important role in translational accuracy. Its function is as follows. Interacts with and stabilizes bases of the 16S rRNA that are involved in tRNA selection in the A site and with the mRNA backbone. Located at the interface of the 30S and 50S subunits, it traverses the body of the 30S subunit contacting proteins on the other side and probably holding the rRNA structure together. The combined cluster of proteins S8, S12 and S17 appears to hold together the shoulder and platform of the 30S subunit. The chain is Small ribosomal subunit protein uS12 from Geobacillus sp. (strain WCH70).